Consider the following 512-residue polypeptide: Mesoderm induction early response protein 1 (512 aa).

Over residues M1–T16 the composition is skewed to low complexity. 2 disordered regions span residues M1–D63 and Y75–I173. Position 10 is a phosphoserine (S10). Positions S17–E36 are enriched in basic and acidic residues. Composition is skewed to acidic residues over residues R37 to E46 and E83 to D105. The segment covering Q129–A144 has biased composition (polar residues). At S141 the chain carries Phosphoserine. Y155 is subject to Phosphotyrosine. Phosphoserine is present on residues S160 and S166. Acidic residues predominate over residues S160–I173. Residues K180–V278 enclose the ELM2 domain. The interaction with HDAC1 stretch occupies residues K180–E284. K239 is covalently cross-linked (Glycyl lysine isopeptide (Lys-Gly) (interchain with G-Cter in SUMO2)). Positions E283–R335 constitute an SANT domain. A disordered region spans residues E366–D512. Phosphoserine is present on residues S367, S369, and S377. Residues T396 to G409 show a composition bias toward polar residues. The span at L414–G423 shows a compositional bias: basic and acidic residues. K420 participates in a covalent cross-link: Glycyl lysine isopeptide (Lys-Gly) (interchain with G-Cter in SUMO2). T448 carries the phosphothreonine modification. Over residues A462–P475 the composition is skewed to basic and acidic residues. The segment covering N482–F494 has biased composition (polar residues). Phosphoserine occurs at positions 483, 488, and 491.

As to quaternary structure, interacts with HDAC1. Part of a complex containing at least CDYL, MIER1, MIER2, HDAC1 and HDAC2. In terms of tissue distribution, ubiquitously expressed, but at very low levels. However, consistent level of expression are observed in heart, testis, thyroid, ovary and adrenal gland. Transcripts are up-regulated in breast carcinoma cell lines and tumor.

The protein resides in the nucleus. The protein localises to the cytoplasm. Its function is as follows. Transcriptional repressor regulating the expression of a number of genes including SP1 target genes. Probably functions through recruitment of HDAC1 a histone deacetylase involved in chromatin silencing. The protein is Mesoderm induction early response protein 1 (MIER1) of Homo sapiens (Human).